Here is a 433-residue protein sequence, read N- to C-terminus: Nuclear hormone receptor family member nhr-98 (433 aa).

Residues 41-116 (SKKCQICENP…FGMTIDNFQF (76 aa)) constitute a DNA-binding region (nuclear receptor). NR C4-type zinc fingers lie at residues 44 to 64 (CQIC…CRAC) and 80 to 104 (CKTE…MQRC). The NR LBD domain maps to 177-433 (ETPYQVSNVL…CSHPGIFLNA (257 aa)).

Belongs to the nuclear hormone receptor family.

The protein resides in the nucleus. Its function is as follows. Orphan nuclear receptor. The polypeptide is Nuclear hormone receptor family member nhr-98 (nhr-98) (Caenorhabditis elegans).